The primary structure comprises 277 residues: NH(3)-dependent NAD(+) synthetase (277 aa).

Residue 36–43 (GLSGGIDS) participates in ATP binding. Asp-42 is a binding site for Mg(2+). Arg-118 is a binding site for deamido-NAD(+). Thr-138 contacts ATP. Glu-143 is a Mg(2+) binding site. 2 residues coordinate ATP: Lys-167 and Ser-189.

The protein belongs to the NAD synthetase family. As to quaternary structure, homodimer.

It catalyses the reaction deamido-NAD(+) + NH4(+) + ATP = AMP + diphosphate + NAD(+) + H(+). The protein operates within cofactor biosynthesis; NAD(+) biosynthesis; NAD(+) from deamido-NAD(+) (ammonia route): step 1/1. Catalyzes the ATP-dependent amidation of deamido-NAD to form NAD. Uses ammonia as a nitrogen source. This is NH(3)-dependent NAD(+) synthetase from Chlorobaculum tepidum (strain ATCC 49652 / DSM 12025 / NBRC 103806 / TLS) (Chlorobium tepidum).